Consider the following 414-residue polypeptide: Esterase FrsA (414 aa).

It belongs to the FrsA family.

The enzyme catalyses a carboxylic ester + H2O = an alcohol + a carboxylate + H(+). Functionally, catalyzes the hydrolysis of esters. The polypeptide is Esterase FrsA (Salmonella choleraesuis (strain SC-B67)).